The following is a 236-amino-acid chain: Proteasome subunit alpha (236 aa).

It belongs to the peptidase T1A family. In terms of assembly, the 20S proteasome core is composed of 14 alpha and 14 beta subunits that assemble into four stacked heptameric rings, resulting in a barrel-shaped structure. The two inner rings, each composed of seven catalytic beta subunits, are sandwiched by two outer rings, each composed of seven alpha subunits. The catalytic chamber with the active sites is on the inside of the barrel. Has a gated structure, the ends of the cylinder being occluded by the N-termini of the alpha-subunits. Is capped by the proteasome-associated ATPase, ARC.

Its subcellular location is the cytoplasm. The protein operates within protein degradation; proteasomal Pup-dependent pathway. Its activity is regulated as follows. The formation of the proteasomal ATPase ARC-20S proteasome complex, likely via the docking of the C-termini of ARC into the intersubunit pockets in the alpha-rings, may trigger opening of the gate for substrate entry. Interconversion between the open-gate and close-gate conformations leads to a dynamic regulation of the 20S proteasome proteolysis activity. Functionally, component of the proteasome core, a large protease complex with broad specificity involved in protein degradation. The sequence is that of Proteasome subunit alpha from Pseudarthrobacter chlorophenolicus (strain ATCC 700700 / DSM 12829 / CIP 107037 / JCM 12360 / KCTC 9906 / NCIMB 13794 / A6) (Arthrobacter chlorophenolicus).